A 492-amino-acid chain; its full sequence is Cytochrome P450 2B12 (492 aa).

At Ser-129 the chain carries Phosphoserine. Residue Cys-437 participates in heme binding.

The protein belongs to the cytochrome P450 family. Requires heme as cofactor. Preputial gland, but not in liver.

It localises to the endoplasmic reticulum membrane. The protein localises to the microsome membrane. The enzyme catalyses an organic molecule + reduced [NADPH--hemoprotein reductase] + O2 = an alcohol + oxidized [NADPH--hemoprotein reductase] + H2O + H(+). Functionally, cytochromes P450 are a group of heme-thiolate monooxygenases. In liver microsomes, this enzyme is involved in an NADPH-dependent electron transport pathway. This isozyme seems responsible for metabolism of 2,2',4,4',5,5'-hexachlorobiphenyl. In Rattus norvegicus (Rat), this protein is Cytochrome P450 2B12 (Cyp2b12).